The sequence spans 867 residues: Protein translocase subunit SecA (867 aa).

Residues glutamine 85, 103-107 (GEGKT), and aspartate 491 each bind ATP.

It belongs to the SecA family. As to quaternary structure, monomer and homodimer. Part of the essential Sec protein translocation apparatus which comprises SecA, SecYEG and auxiliary proteins SecDF. Other proteins may also be involved.

Its subcellular location is the cell membrane. It is found in the cytoplasm. The catalysed reaction is ATP + H2O + cellular proteinSide 1 = ADP + phosphate + cellular proteinSide 2.. Its function is as follows. Part of the Sec protein translocase complex. Interacts with the SecYEG preprotein conducting channel. Has a central role in coupling the hydrolysis of ATP to the transfer of proteins into and across the cell membrane, serving as an ATP-driven molecular motor driving the stepwise translocation of polypeptide chains across the membrane. The chain is Protein translocase subunit SecA from Mycoplasmopsis pulmonis (strain UAB CTIP) (Mycoplasma pulmonis).